A 1077-amino-acid polypeptide reads, in one-letter code: Tudor domain-containing protein 7 (1077 aa).

HTH OST-type domains are found at residues methionine 1 to valine 67 and aspartate 220 to threonine 289. Residues valine 300–asparagine 328 show a composition bias toward polar residues. The disordered stretch occupies residues valine 300–lysine 331. One can recognise an HTH OST-type 3 domain in the interval proline 330–serine 398. Tudor domains lie at phenylalanine 494–leucine 551 and leucine 684–aspartate 741. Positions serine 841 to proline 883 are disordered. The segment covering cysteine 857 to aspartate 868 has biased composition (basic and acidic residues).

Belongs to the TDRD7 family.

It localises to the cytoplasm. Functionally, component of specific cytoplasmic RNA granules involved in post-transcriptional regulation of specific genes: probably acts by binding to specific mRNAs and regulating their translation. Probably required during spermatogenesis. This is Tudor domain-containing protein 7 (tdrd7) from Xenopus tropicalis (Western clawed frog).